A 503-amino-acid polypeptide reads, in one-letter code: Long-chain-fatty-acid--CoA ligase FadD13 (503 aa).

The protein belongs to the ATP-dependent AMP-binding enzyme family. As to quaternary structure, homodimer.

The protein resides in the cell membrane. The enzyme catalyses a long-chain fatty acid + ATP + CoA = a long-chain fatty acyl-CoA + AMP + diphosphate. Its pathway is lipid metabolism; fatty acid biosynthesis. Functionally, required for maintaining the appropriate mycolic acid composition and permeability of the envelope on its exposure to acidic pH. Catalyzes the activation of long-chain fatty acids as acyl-coenzyme A (acyl-CoA), which are then transferred to the multifunctional polyketide synthase (PKS) type III for further chain extension. This Mycobacterium tuberculosis (strain CDC 1551 / Oshkosh) protein is Long-chain-fatty-acid--CoA ligase FadD13 (fadD13).